The primary structure comprises 156 residues: Small ribosomal subunit protein uS7 (156 aa).

It belongs to the universal ribosomal protein uS7 family. In terms of assembly, part of the 30S ribosomal subunit. Contacts proteins S9 and S11.

One of the primary rRNA binding proteins, it binds directly to 16S rRNA where it nucleates assembly of the head domain of the 30S subunit. Is located at the subunit interface close to the decoding center, probably blocks exit of the E-site tRNA. The chain is Small ribosomal subunit protein uS7 from Mycolicibacterium gilvum (strain PYR-GCK) (Mycobacterium gilvum (strain PYR-GCK)).